Here is a 692-residue protein sequence, read N- to C-terminus: Elongation factor G 2 (692 aa).

A tr-type G domain is found at 8-283 (KDVRNIGIMA…GVVNYLPSPL (276 aa)). GTP is bound by residues 17–24 (AHIDAGKT), 81–85 (DTPGH), and 135–138 (NKMD).

The protein belongs to the TRAFAC class translation factor GTPase superfamily. Classic translation factor GTPase family. EF-G/EF-2 subfamily.

Its subcellular location is the cytoplasm. Its function is as follows. Catalyzes the GTP-dependent ribosomal translocation step during translation elongation. During this step, the ribosome changes from the pre-translocational (PRE) to the post-translocational (POST) state as the newly formed A-site-bound peptidyl-tRNA and P-site-bound deacylated tRNA move to the P and E sites, respectively. Catalyzes the coordinated movement of the two tRNA molecules, the mRNA and conformational changes in the ribosome. This is Elongation factor G 2 from Desulfotalea psychrophila (strain LSv54 / DSM 12343).